Consider the following 347-residue polypeptide: NADH-quinone oxidoreductase subunit H (347 aa).

9 helical membrane-spanning segments follow: residues 13–33, 50–70, 82–102, 115–135, 161–181, 198–218, 263–283, 286–306, and 321–341; these read IIMI…IAYV, PNVV…KFVF, AVFL…WAVV, VGIL…IMGG, IGFV…TDIV, FLDW…ISAL, CSLT…IWIL, VPGI…FAMV, and LGWK…AFVL.

This sequence belongs to the complex I subunit 1 family. As to quaternary structure, NDH-1 is composed of 14 different subunits. Subunits NuoA, H, J, K, L, M, N constitute the membrane sector of the complex.

The protein localises to the cell inner membrane. The enzyme catalyses a quinone + NADH + 5 H(+)(in) = a quinol + NAD(+) + 4 H(+)(out). In terms of biological role, NDH-1 shuttles electrons from NADH, via FMN and iron-sulfur (Fe-S) centers, to quinones in the respiratory chain. The immediate electron acceptor for the enzyme in this species is believed to be ubiquinone. Couples the redox reaction to proton translocation (for every two electrons transferred, four hydrogen ions are translocated across the cytoplasmic membrane), and thus conserves the redox energy in a proton gradient. This subunit may bind ubiquinone. The chain is NADH-quinone oxidoreductase subunit H from Rhizobium leguminosarum bv. trifolii (strain WSM2304).